The sequence spans 428 residues: Cytokine-dependent hematopoietic cell linker (428 aa).

The disordered stretch occupies residues 1–22 (MNRQGNRKTTKEGSNDLKFQNF). A phosphotyrosine; by LYN mark is found at tyrosine 69 and tyrosine 96. Disordered stretches follow at residues 135–198 (DKPI…EVQR) and 244–271 (SSSF…PQRC). The segment at 159–164 (PLPPPR) is mediates interaction with PLCG1; essential for BCR signaling; involved in restoration of BCR-induced calcium response and ERK2 and JNK2 activation in BLNK-deficient cells expressing LAT. The mediates interaction with LAT, GRB2, and FGR; involved in translocation to the glycolipid-enriched microdomain and restoration of BCR-induced calcium response in BLNK-deficient DT40 cells expressing LAT stretch occupies residues 178–180 (PEP). The span at 244–253 (SSSFTTSNHS) shows a compositional bias: low complexity. Residues 309–419 (WYIGEYSRQA…RKQCHLTQPL (111 aa)) enclose the SH2 domain.

In terms of assembly, when phosphorylated, interacts with PLCG1, PLCG2, GRB2, VAV and LAT. Interacts with LBR and AGO2. Interacts with FGR. Part of a complex consisting of CLNK, SKAP1 and FYB1. Interacts (via SH2 domain) with FYB1; this interaction allows SKAP1 and FYB1 to promote tyrosine phosphorylation of CLNK by LYN. Interacts (via SH2 domain) with MAP4K1. Post-translationally, tyrosine-phosphorylated upon BCR cross-linking. Tyrosine phosphorylation at both Tyr-69 and Tyr-96 are required for BCR-induced calcium response and are essential to restore PLCG2-mediated signaling in BLNK-deficient DT40 cells, but this phosphorylation is dispensable in cells expressing LAT. Interacts with the SH2 domain of PLCG1 via phosphorylated Tyr-96. Tyrosine phosphorylation is increased when complexed with SKAP1 and FYB1.

It is found in the cytoplasm. Functionally, an adapter protein which plays a role in the regulation of immunoreceptor signaling, including PLC-gamma-mediated B-cell antigen receptor (BCR) signaling and FC-epsilon R1-mediated mast cell degranulation. Together with FGR, it acts as a negative regulator of natural killer cell-activating receptors and inhibits interferon-gamma production. Acts as a positive regulator of both T-cell receptor and natural killer T (NKT) cell receptor signaling in CD4-positive NKT cells. Together with MAP4K1, it enhances CD3-triggered activation of T-cells and subsequent IL2 production. May be involved in tumor necrosis factor induced cell death by promoting reactive oxidative species generation, and MLKL oligomerization, ultimately leading to necrosis. Involved in phosphorylation of LAT. May be involved in high affinity immunoglobulin epsilon receptor signaling in mast cells. This is Cytokine-dependent hematopoietic cell linker (CLNK) from Homo sapiens (Human).